The chain runs to 432 residues: Glutamate-1-semialdehyde 2,1-aminomutase (432 aa).

Residue lysine 269 is modified to N6-(pyridoxal phosphate)lysine.

The protein belongs to the class-III pyridoxal-phosphate-dependent aminotransferase family. HemL subfamily. As to quaternary structure, homodimer. Pyridoxal 5'-phosphate serves as cofactor.

It is found in the cytoplasm. The catalysed reaction is (S)-4-amino-5-oxopentanoate = 5-aminolevulinate. It participates in porphyrin-containing compound metabolism; protoporphyrin-IX biosynthesis; 5-aminolevulinate from L-glutamyl-tRNA(Glu): step 2/2. Its pathway is porphyrin-containing compound metabolism; chlorophyll biosynthesis. This Chloroherpeton thalassium (strain ATCC 35110 / GB-78) protein is Glutamate-1-semialdehyde 2,1-aminomutase.